The chain runs to 291 residues: Taste receptor type 2 member 16 (291 aa).

M1 is a topological domain (extracellular). Residues 2–22 (IPIQLTVFFMIIYVLESLTII) form a helical membrane-spanning segment. Residues 23–41 (VQSSLIVAVLGREWLQVRR) are Cytoplasmic-facing. The helical transmembrane segment at 42–62 (LMPVDMILISLGISRFCLQWA) threads the bilayer. Residues 63–84 (SMLNNFCSYFNLNYVLCNLTIT) are Extracellular-facing. The N-linked (GlcNAc...) asparagine glycan is linked to N80. Residues 85-105 (WEFFNILTFWLNSLLTVFYCI) traverse the membrane as a helical segment. Topologically, residues 106-125 (KVSSFTHHIFLWLRWRILRL) are cytoplasmic. A helical membrane pass occupies residues 126-146 (FPWILLGSLMITCVTIIPSAI). At 147–182 (GNYIQIQLLTMEHLPRNSTVTDKLENFHQYQFQAHT) the chain is on the extracellular side. The N-linked (GlcNAc...) asparagine glycan is linked to N163. Residues 183–203 (VALVIPFILFLASTIFLMASL) form a helical membrane-spanning segment. Over 204–228 (TKQIQHHSTGHCNPSMKARFTALRS) the chain is Cytoplasmic. A helical transmembrane segment spans residues 229–249 (LAVLFIVFTSYFLTILITIIG). Topologically, residues 250–257 (TLFDKRCW) are extracellular. A helical transmembrane segment spans residues 258 to 278 (LWVWEAFVYAFILMHSTSLML). At 279-291 (SSPTLKRILKGKC) the chain is on the cytoplasmic side.

Belongs to the G-protein coupled receptor T2R family. Interacts with RTP3 and RTP4. Expressed in a subset of gustducin-positive taste receptor cells of the tongue. Expressed in circumvallate papillae and testis.

The protein resides in the cell membrane. In terms of biological role, gustducin-coupled receptor implicated in the perception of bitter compounds in the oral cavity and the gastrointestinal tract. Signals through PLCB2 and the calcium-regulated cation channel TRPM5. This chain is Taste receptor type 2 member 16 (TAS2R16), found in Homo sapiens (Human).